We begin with the raw amino-acid sequence, 399 residues long: MAQRAFPNPYADYNKSLAEGYFDAAGRLTPEFSQRLTNKIRELLQQMERGLKSADPRDGTGYTGWAGIAVLYLHLYDVFGDPAYLQLAHGYVKQSLNCLTKRSITFLCGDAGPLAVAAVLYHKMNNEKQAEDCITRLIHLNKIDPHAPNEMLYGRIGYIYALLFVNKNFGVEKIPQSHIQQICETILTSGENLARKRNFTAKSPLMYEWYQEYYVGAAHGLAGIYYYLMQPSLQVSQGKLHSLVKPSVDYVCQLKFPSGNYPPCIGDNRDLLVHWCHGAPGVIYMLIQAYKVFREEKYLCDAYQCADVIWQYGLLKKGYGLCHGSAGNAYAFLTLYNLTQDMKYLYRACKFAEWCLEYGEHGCRTPDTPFSLFEGMAGTIYFLADLLVPTKARFPAFEL.

Ala-2 carries the N-acetylalanine modification. N6-acetyllysine is present on Lys-142. Cys-276 provides a ligand contact to Zn(2+). Position 317 (Lys-317) interacts with glutathione. Residues Cys-322 and His-323 each contribute to the Zn(2+) site. 364–367 contributes to the glutathione binding site; sequence RTPD.

It belongs to the LanC-like protein family. Interacts with the C-terminal of STOM. Interacts with the EPS8 SH3 domain. Interaction with EPS8 is inhibited by glutathione binding. As to quaternary structure, (Microbial infection) Interacts with P.falciparum SBP1. Detected in erythrocytes, brain, kidney, testis, ovary, heart, lung, placenta and spleen (at protein level). Ubiquitous. Strongly expressed in brain, spinal cord, pituitary gland, kidney, heart, skeletal muscle, pancreas, ovary and testis.

The protein localises to the cytoplasm. It localises to the cell membrane. It catalyses the reaction RX + glutathione = an S-substituted glutathione + a halide anion + H(+). The enzyme catalyses 1-chloro-2,4-dinitrobenzene + glutathione = 2,4-dinitrophenyl-S-glutathione + chloride + H(+). In terms of biological role, functions as a glutathione transferase. Catalyzes conjugation of the glutathione (GSH) to artificial substrates 1-chloro-2,4-dinitrobenzene (CDNB) and p-nitrophenyl acetate. Mitigates neuronal oxidative stress during normal postnatal development and in response to oxidative stresses probably through GSH antioxidant defense mechanism. May play a role in EPS8 signaling. Binds glutathione. The chain is Glutathione S-transferase LANCL1 from Homo sapiens (Human).